A 757-amino-acid chain; its full sequence is Protein hunchback (757 aa).

2 disordered regions span residues 30 to 51 and 171 to 213; these read EPGH…PIPS and EKLQ…EDMK. Over residues 39 to 51 the composition is skewed to polar residues; that stretch reads SVASSPRQSPIPS. Over residues 197–213 the composition is skewed to basic and acidic residues; that stretch reads EPEKEHDQMSNSSEDMK. 4 C2H2-type zinc fingers span residues 239-261, 268-290, 296-318, and 324-348; these read YKCK…TRTH, LQCP…IRKH, FQCD…RKSH, and YRCA…KYGH. Disordered stretches follow at residues 367–416, 511–535, and 602–694; these read DVYG…VATS, EQLQ…YERK, and MTSP…APPS. 2 stretches are compositionally biased toward low complexity: residues 397 to 414 and 512 to 521; these read VAAV…QPVA and QLQQQNQQQS. The span at 522–531 shows a compositional bias: acidic residues; sequence DNEEEDQDDE. The segment covering 651–694 has biased composition (low complexity); sequence ANTSASSTASSSGNSSNASSNSNGNSSSNSSSNGTTSAVAAPPS. 2 C2H2-type zinc fingers span residues 704–726 and 732–756; these read YECK…MGYH and FKCN…RNAH.

Belongs to the hunchback C2H2-type zinc-finger protein family.

The protein resides in the nucleus. In terms of biological role, gap class segmentation protein that controls development of head structures. This Drosophila sechellia (Fruit fly) protein is Protein hunchback (hb).